The following is a 58-amino-acid chain: Weak neurotoxin D2B (58 aa).

3 cysteine pairs are disulfide-bonded: Cys-3–Cys-24, Cys-17–Cys-41, and Cys-43–Cys-54.

In terms of tissue distribution, expressed by the venom gland.

The protein resides in the secreted. Functionally, binds to muscle nicotinic acetylcholine receptor (nAChR) and inhibit acetylcholine from binding to the receptor, thereby impairing neuromuscular transmission. In Micrurus pyrrhocryptus (Coral snake), this protein is Weak neurotoxin D2B.